A 274-amino-acid polypeptide reads, in one-letter code: MKKTQTWIITCIYLQLLLFNPLVRTQGICRNRVTDDVKDVTKLVANLPKDYKITLKYVPGMDVLPSHCWISEMVEQLSVSLTDLLDKFSNISEGLSNYSIIDKLVKIVDDLVECMEEHSFENVKKSSKSPEPRLFTPEKFFGIFNRSIDAFKDLEMVAPKTSECVISSTLTPEKDSRVSVTKPFMLPPVAASSLRNDSSSSNRKASDSIEDSSLQWAAVALPAFFSLVIGFAFGALYWKKKQPNLTRTVENIQINEEDNEISMLQEKEREFQEV.

Residues 1 to 25 (MKKTQTWIITCIYLQLLLFNPLVRT) form the signal peptide. Pyrrolidone carboxylic acid is present on glutamine 26. Residues 26-215 (QGICRNRVTD…SDSIEDSSLQ (190 aa)) are Extracellular-facing. Cystine bridges form between cysteine 29–cysteine 114 and cysteine 68–cysteine 164. Asparagine 90, asparagine 97, asparagine 145, and asparagine 196 each carry an N-linked (GlcNAc...) asparagine glycan. The helical transmembrane segment at 216–238 (WAAVALPAFFSLVIGFAFGALYW) threads the bilayer. At 239–274 (KKKQPNLTRTVENIQINEEDNEISMLQEKEREFQEV) the chain is on the cytoplasmic side.

Belongs to the SCF family. As to quaternary structure, homodimer, non-covalently linked. Heterotetramer with KIT, binding two KIT molecules; thereby mediates KIT dimerization and subsequent activation by autophosphorylation. A soluble form is produced by proteolytic processing of the extracellular domain.

It localises to the cytoplasm. It is found in the cytoskeleton. The protein resides in the cell membrane. The protein localises to the cell projection. Its subcellular location is the lamellipodium. It localises to the filopodium. It is found in the secreted. In terms of biological role, ligand for the receptor-type protein-tyrosine kinase KIT. Plays an essential role in the regulation of cell survival and proliferation, hematopoiesis, stem cell maintenance, gametogenesis, mast cell development, migration and function, and in melanogenesis. KITLG/SCF binding can activate several signaling pathways. Promotes phosphorylation of PIK3R1, the regulatory subunit of phosphatidylinositol 3-kinase, and subsequent activation of the kinase AKT1. KITLG/SCF and KIT also transmit signals via GRB2 and activation of RAS, RAF1 and the MAP kinases MAPK1/ERK2 and/or MAPK3/ERK1. KITLG/SCF and KIT promote activation of STAT family members STAT1, STAT3 and STAT5. KITLG/SCF and KIT promote activation of PLCG1, leading to the production of the cellular signaling molecules diacylglycerol and inositol 1,4,5-trisphosphate. KITLG/SCF acts synergistically with other cytokines, probably interleukins. This is Kit ligand (KITLG) from Sus scrofa (Pig).